A 669-amino-acid polypeptide reads, in one-letter code: DNA mismatch repair protein MutL (669 aa).

The segment at 356–382 (FEQRQNTENNQEKTFSSEESNSKPFME) is disordered. Positions 361–378 (NTENNQEKTFSSEESNSK) are enriched in polar residues.

This sequence belongs to the DNA mismatch repair MutL/HexB family.

In terms of biological role, this protein is involved in the repair of mismatches in DNA. It is required for dam-dependent methyl-directed DNA mismatch repair. May act as a 'molecular matchmaker', a protein that promotes the formation of a stable complex between two or more DNA-binding proteins in an ATP-dependent manner without itself being part of a final effector complex. In Staphylococcus aureus (strain USA300), this protein is DNA mismatch repair protein MutL.